The primary structure comprises 348 residues: D-erythrose-4-phosphate dehydrogenase (348 aa).

Residues 12–13 (RI) and arginine 81 contribute to the NAD(+) site. Residues 154 to 156 (SCT), arginine 200, 213 to 214 (TK), and arginine 236 contribute to the substrate site. Residue cysteine 155 is the Nucleophile of the active site. Asparagine 318 provides a ligand contact to NAD(+).

This sequence belongs to the glyceraldehyde-3-phosphate dehydrogenase family. Epd subfamily. In terms of assembly, homotetramer.

It is found in the cytoplasm. The enzyme catalyses D-erythrose 4-phosphate + NAD(+) + H2O = 4-phospho-D-erythronate + NADH + 2 H(+). Its pathway is cofactor biosynthesis; pyridoxine 5'-phosphate biosynthesis; pyridoxine 5'-phosphate from D-erythrose 4-phosphate: step 1/5. Functionally, catalyzes the NAD-dependent conversion of D-erythrose 4-phosphate to 4-phosphoerythronate. The protein is D-erythrose-4-phosphate dehydrogenase of Salmonella schwarzengrund (strain CVM19633).